We begin with the raw amino-acid sequence, 439 residues long: MLSTDTIYALSSGSLPAGVAIIRVSGPETADALVRLCGTLPPPRIATLRTIRTRNGETLDSGLVLYFPTPASFTGEDCCELQVHGGRAVVSAILDELAATGGLRHAEAGEFARRAFQNGKLDLVEVEGLADLIAAETEMQRRLAIEQSGGGQSALYAGWARRLTHSRAMIEAELDFADEDDVPGSVSAVIWEDVGRLRQEIDGHIARAGLAEIIRDGLKIVIAGEPNAGKSSLLNALARRDIAIVTEVAGTTRDVLSVDLSLAGFSVKLFDTAGLRETDELVEREGIRRARQVIADADLVLLLSEKPGHFRIDEVLPENVPVIRVATKVDRPSPSWAPSDADIFLSTRTGEGMADLLTALQSHLPDLAGRTALAMPSRKRHVDCLRQASAALERSLISSDLELRAEQLRQAGDALGRITGRVDVENLLDVIFSEFCIGK.

R23, E80, and K120 together coordinate (6S)-5-formyl-5,6,7,8-tetrahydrofolate. Positions 217–365 (GLKIVIAGEP…LLTALQSHLP (149 aa)) constitute a TrmE-type G domain. N227 provides a ligand contact to K(+). GTP is bound by residues 227–232 (NAGKSS), 246–252 (TEVAGTT), and 271–274 (DTAG). S231 serves as a coordination point for Mg(2+). 3 residues coordinate K(+): T246, V248, and T251. T252 is a Mg(2+) binding site. K439 is a (6S)-5-formyl-5,6,7,8-tetrahydrofolate binding site.

Belongs to the TRAFAC class TrmE-Era-EngA-EngB-Septin-like GTPase superfamily. TrmE GTPase family. Homodimer. Heterotetramer of two MnmE and two MnmG subunits. Requires K(+) as cofactor.

The protein resides in the cytoplasm. In terms of biological role, exhibits a very high intrinsic GTPase hydrolysis rate. Involved in the addition of a carboxymethylaminomethyl (cmnm) group at the wobble position (U34) of certain tRNAs, forming tRNA-cmnm(5)s(2)U34. This chain is tRNA modification GTPase MnmE, found in Rhizobium meliloti (strain 1021) (Ensifer meliloti).